The sequence spans 303 residues: MIERFQGDEGRRRLVATLTEHRLVANRQELAERLVAVGELMEAPAGTTFINQGDQTSEVFFIIAGKVEVRVNGKVVANRFPGDSVGEMAAIEPSQPRAASVIPVEDTVLIKVSEAEFSAAAEQFPDVWRRIAATLARRLAERNHLVTAQRERVRVFIMSSVEALPIVDLLIKQFAHDPFLAVAWKNGVFRASQYTLDELEAELDDSDFAVAVAHGDDVLITRDDEWPTIRDNVILEFGLFMGRLGRRRAFLMEPRDVDLKLPSDLAGLTTIPYRYVKGKDAEHYIAPACARLRELILAAGAKD.

14–138 contributes to the a nucleoside 3',5'-cyclic phosphate binding site; sequence LVATLTEHRL…RRIAATLARR (125 aa). A TIR-like region spans residues 154-273; sequence RVFIMSSVEA…DLAGLTTIPY (120 aa).

The protein resides in the cytoplasm. It carries out the reaction NAD(+) + H2O = ADP-D-ribose + nicotinamide + H(+). Pycsar (pyrimidine cyclase system for antiphage resistance) provides immunity against bacteriophage. The pyrimidine cyclase (PycC) synthesizes cyclic nucleotides in response to infection; these serve as specific second messenger signals. The signals activate the adjacent effector, leading to bacterial cell death and abortive phage infection. A clade B Pycsar system. Its function is as follows. The effector gene of a two-gene Pycsar system. Expression of this and adjacent uridylate cyclase XpPycC (AC P0DV28) confers resistance to bacteriophage T7. When cells expressing the Pycsar system are infected by phage T7 at low multiplicity of infection (0.2 MOI) the culture survivey, at 2.0 MOI bacteria enter growth arrest. The same cells enter growth arrest after exposure to 2.5 mM cUMP but not cCMP; the effector protein responds only to the cUMP usually produced by its cognate NTP cyclase. NAD(+) levels in infected cells are depleted between 5 and 10 minutes after infection with T7 at MOI of 2. Probably only responds to cUMP. This Xanthomonas perforans protein is Pycsar effector protein XpPycTIR.